The chain runs to 317 residues: Melanocyte-stimulating hormone receptor (317 aa).

Topologically, residues 1–37 (MPVQGSQRRLLGSLNSTPTATPHLGLAANQTGARCLE) are extracellular. N-linked (GlcNAc...) asparagine glycosylation occurs at Asn-29. Residues 38–63 (VSVPDGLFLSLGLVSLVENVLVVTAI) form a helical membrane-spanning segment. The Cytoplasmic segment spans residues 64-72 (AKNRNLHSP). The chain crosses the membrane as a helical span at residues 73 to 93 (MYCFICCLALSDLLVSGSNML). The Extracellular portion of the chain corresponds to 94–118 (ETAVTLLLEAGALAARAAVVQQLDN). A helical membrane pass occupies residues 119 to 140 (VIDVITCSSMLSSLCFLGAIAV). At 141–163 (DRYISIFYALRYHSIVTLPRARR) the chain is on the cytoplasmic side. A helical membrane pass occupies residues 164-183 (AVAAIWVASVLFSTLFIAYY). The Extracellular portion of the chain corresponds to 184–191 (DHAAVLLC). A helical membrane pass occupies residues 192 to 211 (LVIFFLAMLVLMAVLYVHML). The Cytoplasmic portion of the chain corresponds to 212 to 240 (ARACQHAQGIARLHKRQRLAHQGFGLKGA). The chain crosses the membrane as a helical span at residues 241-266 (ATLTILLGIFFLCWGPFFLHLTLIVL). Over 267 to 279 (CPQHPTCSCIFKN) the chain is Extracellular. Residues 280-300 (FNLFLALIICNAIIDPLIYAF) form a helical membrane-spanning segment. The Cytoplasmic portion of the chain corresponds to 301 to 317 (RSQELRRTLKEVLLCSW). Cys-315 carries S-palmitoyl cysteine lipidation.

The protein belongs to the G-protein coupled receptor 1 family. Interacts with MGRN1, but does not undergo MGRN1-mediated ubiquitination; this interaction competes with GNAS-binding and thus inhibits agonist-induced cAMP production. Interacts with OPN3; the interaction results in a decrease in MC1R-mediated cAMP signaling and ultimately a decrease in melanin production in melanocytes.

Its subcellular location is the cell membrane. Its function is as follows. Receptor for MSH (alpha, beta and gamma) and ACTH. The activity of this receptor is mediated by G proteins which activate adenylate cyclase. Mediates melanogenesis, the production of eumelanin (black/brown) and phaeomelanin (red/yellow), via regulation of cAMP signaling in melanocytes. This chain is Melanocyte-stimulating hormone receptor (MC1R), found in Papio hamadryas (Hamadryas baboon).